Reading from the N-terminus, the 377-residue chain is Succinyl-diaminopimelate desuccinylase (377 aa).

Histidine 71 is a binding site for Zn(2+). The active site involves aspartate 73. Aspartate 102 provides a ligand contact to Zn(2+). Glutamate 132 serves as the catalytic Proton acceptor. Zn(2+)-binding residues include glutamate 133, glutamate 161, and histidine 346.

The protein belongs to the peptidase M20A family. DapE subfamily. In terms of assembly, homodimer. Zn(2+) is required as a cofactor. Co(2+) serves as cofactor.

It carries out the reaction N-succinyl-(2S,6S)-2,6-diaminopimelate + H2O = (2S,6S)-2,6-diaminopimelate + succinate. It participates in amino-acid biosynthesis; L-lysine biosynthesis via DAP pathway; LL-2,6-diaminopimelate from (S)-tetrahydrodipicolinate (succinylase route): step 3/3. Its function is as follows. Catalyzes the hydrolysis of N-succinyl-L,L-diaminopimelic acid (SDAP), forming succinate and LL-2,6-diaminopimelate (DAP), an intermediate involved in the bacterial biosynthesis of lysine and meso-diaminopimelic acid, an essential component of bacterial cell walls. The chain is Succinyl-diaminopimelate desuccinylase from Rhizorhabdus wittichii (strain DSM 6014 / CCUG 31198 / JCM 15750 / NBRC 105917 / EY 4224 / RW1) (Sphingomonas wittichii).